Reading from the N-terminus, the 72-residue chain is SRY-related protein ADW5 (72 aa).

A DNA-binding region (HMG box) is located at residues 1–69; that stretch reads VKRPMNAFMV…KHMADYPDYK (69 aa).

It is found in the nucleus. The sequence is that of SRY-related protein ADW5 from Alligator mississippiensis (American alligator).